The sequence spans 384 residues: F-box only protein 5 (384 aa).

The interval 25–67 (EVKGHKVSPRKTGALSLRSPAATNVSTPLESRSKGPHNKENYQ) is disordered. Positions 45–54 (AATNVSTPLE) are enriched in polar residues. Basic and acidic residues predominate over residues 55–67 (SRSKGPHNKENYQ). Positions 187-234 (CKLMRKDMRHILARILGLLGDCDLISCTKVSRTWRKIICQDQLALQRW) constitute an F-box domain. The ZBR-type zinc finger occupies 311-359 (SLRRCSRCSSPARFDAVMQRAVCTRISCAFEFCTLCQSAFHDSTPCRNT). Cys315, Cys318, Cys333, Cys338, Cys343, Cys346, His351, and Cys356 together coordinate Zn(2+).

In terms of assembly, part of a SCF (SKP1-cullin-F-box) protein ligase complex.

Its subcellular location is the nucleus. The protein resides in the cytoplasm. It participates in protein modification; protein ubiquitination. In terms of biological role, during embryonic development, regulates the integrity of the genome and therefore the cell cycle progression by preventing rereplication through an APC-Cdh1-dependent mechanism. This is F-box only protein 5 from Danio rerio (Zebrafish).